The primary structure comprises 316 residues: Methionyl-tRNA formyltransferase (316 aa).

112–115 (GLLP) contributes to the (6S)-5,6,7,8-tetrahydrofolate binding site.

The protein belongs to the Fmt family.

It catalyses the reaction L-methionyl-tRNA(fMet) + (6R)-10-formyltetrahydrofolate = N-formyl-L-methionyl-tRNA(fMet) + (6S)-5,6,7,8-tetrahydrofolate + H(+). Its function is as follows. Attaches a formyl group to the free amino group of methionyl-tRNA(fMet). The formyl group appears to play a dual role in the initiator identity of N-formylmethionyl-tRNA by promoting its recognition by IF2 and preventing the misappropriation of this tRNA by the elongation apparatus. The sequence is that of Methionyl-tRNA formyltransferase from Chlamydia muridarum (strain MoPn / Nigg).